Consider the following 323-residue polypeptide: Lipoyl synthase (323 aa).

Residues C61, C66, C72, C87, C91, C94, and S300 each contribute to the [4Fe-4S] cluster site. The 217-residue stretch at 73–289 (WDKKHATFMI…ETVAYSKGFL (217 aa)) folds into the Radical SAM core domain.

It belongs to the radical SAM superfamily. Lipoyl synthase family. [4Fe-4S] cluster is required as a cofactor.

It localises to the cytoplasm. It carries out the reaction [[Fe-S] cluster scaffold protein carrying a second [4Fe-4S](2+) cluster] + N(6)-octanoyl-L-lysyl-[protein] + 2 oxidized [2Fe-2S]-[ferredoxin] + 2 S-adenosyl-L-methionine + 4 H(+) = [[Fe-S] cluster scaffold protein] + N(6)-[(R)-dihydrolipoyl]-L-lysyl-[protein] + 4 Fe(3+) + 2 hydrogen sulfide + 2 5'-deoxyadenosine + 2 L-methionine + 2 reduced [2Fe-2S]-[ferredoxin]. The protein operates within protein modification; protein lipoylation via endogenous pathway; protein N(6)-(lipoyl)lysine from octanoyl-[acyl-carrier-protein]: step 2/2. Its function is as follows. Catalyzes the radical-mediated insertion of two sulfur atoms into the C-6 and C-8 positions of the octanoyl moiety bound to the lipoyl domains of lipoate-dependent enzymes, thereby converting the octanoylated domains into lipoylated derivatives. The chain is Lipoyl synthase from Rhizobium etli (strain CIAT 652).